The primary structure comprises 137 residues: Profilin-3 (137 aa).

This sequence belongs to the profilin family. As to quaternary structure, interacts with ACTRT3.

It localises to the cytoplasm. The protein resides in the cytoskeleton. It is found in the nucleus. Its function is as follows. Binds to actin and affects the structure of the cytoskeleton. Binds to poly-L-proline, phosphatidylinositol 3-phosphate (PtdIns(3)P), phosphatidylinositol 4,5-bisphosphate (PtdIns(4,5)P2) and phosphatidylinositol 4-phosphate (PtdIns(4)P). Slightly reduces actin polymerization. May be involved in spermatogenesis. This is Profilin-3 (PFN3) from Bos taurus (Bovine).